The following is a 254-amino-acid chain: DNA repair protein RecO (254 aa).

Belongs to the RecO family.

In terms of biological role, involved in DNA repair and RecF pathway recombination. This is DNA repair protein RecO from Rhodopseudomonas palustris (strain BisB18).